Consider the following 365-residue polypeptide: Uroporphyrinogen decarboxylase (365 aa).

Polar residues predominate over residues 1–17; it reads MSANDSPSGQQTTTSAS. Residues 1-20 form a disordered region; sequence MSANDSPSGQQTTTSASLDA. Substrate is bound by residues 48 to 52, aspartate 97, tyrosine 172, serine 227, and histidine 341; that span reads RQAGR.

It belongs to the uroporphyrinogen decarboxylase family. As to quaternary structure, homodimer.

The protein localises to the cytoplasm. The enzyme catalyses uroporphyrinogen III + 4 H(+) = coproporphyrinogen III + 4 CO2. It participates in porphyrin-containing compound metabolism; protoporphyrin-IX biosynthesis; coproporphyrinogen-III from 5-aminolevulinate: step 4/4. Its function is as follows. Catalyzes the decarboxylation of four acetate groups of uroporphyrinogen-III to yield coproporphyrinogen-III. This Streptomyces griseus subsp. griseus (strain JCM 4626 / CBS 651.72 / NBRC 13350 / KCC S-0626 / ISP 5235) protein is Uroporphyrinogen decarboxylase.